The following is a 489-amino-acid chain: uncharacterized protein (489 aa).

The next 11 membrane-spanning stretches (helical) occupy residues 29–49, 67–87, 90–110, 119–139, 152–172, 186–206, 276–296, 308–328, 351–371, 397–417, and 418–438; these read FIASCILFCCPGIYLAVTGLG, LLYALFTVCGWAGGPILKYLG, WALALGATGYPIYIGGLWYFD, IFTGAYEGIAAGLLWASTAYI, FIATQWTILAFGSTVGSFIAF, AVYIIFIIIMACAVLLAILFI, LNNVLFWVIQFFVPYLFTLIL, IIGLTIQAVVIMATLSGELGW, GGALVLYLLMGIQYGSSIVSV, AAGMCVSFGIDAAGVSFLGQG, and IIYFIFLFVMCASQLIMTSIF.

The protein localises to the membrane. This is an uncharacterized protein from Schizosaccharomyces pombe (strain 972 / ATCC 24843) (Fission yeast).